A 74-amino-acid chain; its full sequence is Large ribosomal subunit protein bL31 (74 aa).

Positions 16, 18, 38, and 41 each coordinate Zn(2+).

This sequence belongs to the bacterial ribosomal protein bL31 family. Type A subfamily. In terms of assembly, part of the 50S ribosomal subunit. Zn(2+) serves as cofactor.

In terms of biological role, binds the 23S rRNA. This is Large ribosomal subunit protein bL31 from Acinetobacter baumannii (strain AB307-0294).